The sequence spans 697 residues: SPX domain-containing membrane protein OsI_08463 (697 aa).

Residues 2–145 (VNFGKRLMAD…GYKFTDYYVS (144 aa)) form the SPX domain. Transmembrane regions (helical) follow at residues 247-267 (FMSL…TYII), 278-298 (LGAA…AQVF), 315-335 (LVFS…AYDV), 338-356 (LTVL…ARAV), 375-395 (AGFV…AGLL), 411-431 (LPGW…WISF), 513-533 (LLIY…SSVV), 544-564 (TVAM…VIVG), 576-596 (ILVA…RFTS), 604-624 (VSSA…NLSL), and 670-690 (LLNV…VATF).

This sequence belongs to the major facilitator superfamily.

The protein resides in the membrane. The chain is SPX domain-containing membrane protein OsI_08463 from Oryza sativa subsp. indica (Rice).